A 73-amino-acid chain; its full sequence is Translation initiation factor IF-1 (73 aa).

Residues 1 to 72 (MAKEDVIEVE…SRGRITYRYR (72 aa)) form the S1-like domain.

It belongs to the IF-1 family. Component of the 30S ribosomal translation pre-initiation complex which assembles on the 30S ribosome in the order IF-2 and IF-3, IF-1 and N-formylmethionyl-tRNA(fMet); mRNA recruitment can occur at any time during PIC assembly.

The protein resides in the cytoplasm. Functionally, one of the essential components for the initiation of protein synthesis. Stabilizes the binding of IF-2 and IF-3 on the 30S subunit to which N-formylmethionyl-tRNA(fMet) subsequently binds. Helps modulate mRNA selection, yielding the 30S pre-initiation complex (PIC). Upon addition of the 50S ribosomal subunit IF-1, IF-2 and IF-3 are released leaving the mature 70S translation initiation complex. This Rubrobacter xylanophilus (strain DSM 9941 / JCM 11954 / NBRC 16129 / PRD-1) protein is Translation initiation factor IF-1.